Consider the following 473-residue polypeptide: Photosystem II CP43 reaction center protein (473 aa).

Residues 1-14 (MKTLYSLRRFYPVE) constitute a propeptide that is removed on maturation. Threonine 15 is modified (N-acetylthreonine). Phosphothreonine is present on threonine 15. The next 5 helical transmembrane spans lie at 69–93 (LFEV…PHLA), 134–155 (LLGP…KDRN), 178–200 (KALY…RKIT), 255–275 (KPFA…LSYS), and 291–312 (WFNN…ASQA). Residue glutamate 367 coordinates [CaMn4O5] cluster. Residues 447 to 471 (RARAAAAGFEKGIDRDFEPVLSMTP) traverse the membrane as a helical segment.

This sequence belongs to the PsbB/PsbC family. PsbC subfamily. In terms of assembly, PSII is composed of 1 copy each of membrane proteins PsbA, PsbB, PsbC, PsbD, PsbE, PsbF, PsbH, PsbI, PsbJ, PsbK, PsbL, PsbM, PsbT, PsbX, PsbY, PsbZ, Psb30/Ycf12, at least 3 peripheral proteins of the oxygen-evolving complex and a large number of cofactors. It forms dimeric complexes. Requires Binds multiple chlorophylls and provides some of the ligands for the Ca-4Mn-5O cluster of the oxygen-evolving complex. It may also provide a ligand for a Cl- that is required for oxygen evolution. PSII binds additional chlorophylls, carotenoids and specific lipids. as cofactor.

The protein localises to the plastid. It localises to the chloroplast thylakoid membrane. Its function is as follows. One of the components of the core complex of photosystem II (PSII). It binds chlorophyll and helps catalyze the primary light-induced photochemical processes of PSII. PSII is a light-driven water:plastoquinone oxidoreductase, using light energy to abstract electrons from H(2)O, generating O(2) and a proton gradient subsequently used for ATP formation. This chain is Photosystem II CP43 reaction center protein, found in Eucalyptus globulus subsp. globulus (Tasmanian blue gum).